The primary structure comprises 81 residues: Putative membrane protein insertion efficiency factor (81 aa).

The protein belongs to the UPF0161 family.

It localises to the cell inner membrane. Its function is as follows. Could be involved in insertion of integral membrane proteins into the membrane. The sequence is that of Putative membrane protein insertion efficiency factor from Pseudomonas syringae pv. tomato (strain ATCC BAA-871 / DC3000).